The following is a 409-amino-acid chain: Phosphatidylserine decarboxylase proenzyme, mitochondrial (409 aa).

Residues 1–52 constitute a mitochondrion transit peptide; sequence MATSVGHRCLGLLHGVAPWRSSLHPCEITALSQSLQPLRKLPFRAFRTDARK. Topologically, residues 53–63 are mitochondrial matrix; sequence IHTAPARTMFL. A helical membrane pass occupies residues 64–82; it reads LRPVPILLATGGGYAGYRQ. At 83-409 the chain is on the mitochondrial intermembrane side; that stretch reads YEKYRERELE…IRFGEALGSL (327 aa). Active-site charge relay system; for autoendoproteolytic cleavage activity residues include D191, H267, and S378. S378 functions as the Schiff-base intermediate with substrate; via pyruvic acid; for decarboxylase activity in the catalytic mechanism. At S378 the chain carries Pyruvic acid (Ser); by autocatalysis.

Belongs to the phosphatidylserine decarboxylase family. PSD-B subfamily. Eukaryotic type I sub-subfamily. In terms of assembly, heterodimer of a large membrane-associated beta subunit and a small pyruvoyl-containing alpha subunit. It depends on pyruvate as a cofactor. Post-translationally, is synthesized initially as an inactive proenzyme. Formation of the active enzyme involves a self-maturation process in which the active site pyruvoyl group is generated from an internal serine residue via an autocatalytic post-translational modification. Two non-identical subunits are generated from the proenzyme in this reaction, and the pyruvate is formed at the N-terminus of the alpha chain, which is derived from the carboxyl end of the proenzyme. The autoendoproteolytic cleavage occurs by a canonical serine protease mechanism, in which the side chain hydroxyl group of the serine supplies its oxygen atom to form the C-terminus of the beta chain, while the remainder of the serine residue undergoes an oxidative deamination to produce ammonia and the pyruvoyl prosthetic group on the alpha chain. During this reaction, the Ser that is part of the protease active site of the proenzyme becomes the pyruvoyl prosthetic group, which constitutes an essential element of the active site of the mature decarboxylase.

The protein localises to the mitochondrion inner membrane. It localises to the lipid droplet. Its subcellular location is the cytoplasm. It carries out the reaction a 1,2-diacyl-sn-glycero-3-phospho-L-serine + H(+) = a 1,2-diacyl-sn-glycero-3-phosphoethanolamine + CO2. It participates in phospholipid metabolism; phosphatidylethanolamine biosynthesis. Its function is as follows. Catalyzes the formation of phosphatidylethanolamine (PtdEtn) from phosphatidylserine (PtdSer). Plays a central role in phospholipid metabolism and in the interorganelle trafficking of phosphatidylserine. May be involved in lipid droplet biogenesis at the endoplasmic reticulum membrane. The protein is Phosphatidylserine decarboxylase proenzyme, mitochondrial of Pongo abelii (Sumatran orangutan).